A 354-amino-acid polypeptide reads, in one-letter code: Membrane progestin receptor beta (354 aa).

Residues 1–76 (MTTAILERLS…FSLFQKHNEV (76 aa)) are Cytoplasmic-facing. A helical membrane pass occupies residues 77–97 (VNVWTHLLAALAVLLRFWAFV). Residues 98-111 (EAGALQWASPHTLP) lie on the Extracellular side of the membrane. Residues 112–132 (LLLFILSSITYLTCSLLAHLL) form a helical membrane-spanning segment. The Cytoplasmic portion of the chain corresponds to 133-173 (QSKSELSHYTFYFVDYVGVSVYQYGSALAHFFYSSDQAWYE). A helical membrane pass occupies residues 174 to 194 (LFWIFFLPAAAFCGWLSCAGC). The Extracellular segment spans residues 195-213 (CYAKYRYRRPYPVMRKICQ). The chain crosses the membrane as a helical span at residues 214 to 234 (VVPAGLAFVLDISPVAHRVAL). At 235–243 (CHLAGCQEQ) the chain is on the cytoplasmic side. A helical transmembrane segment spans residues 244 to 264 (AAWYHTLQILFFLVSAYFFSC). Topologically, residues 265 to 283 (PVPEKYFPGSCDIVGHGHQ) are extracellular. The chain crosses the membrane as a helical span at residues 284 to 304 (IFHAFLSVCTLSQLEAILLDY). Residues 305-315 (QGRHEIFLQRH) are Cytoplasmic-facing. Residues 316 to 336 (GPLSVYSACLSFFVLAACSAA) form a helical membrane-spanning segment. The Extracellular segment spans residues 337 to 354 (TATLLRHKVKDRLIKKDS).

The protein belongs to the ADIPOR family. Expressed in brain and testis.

The protein localises to the cell membrane. Its function is as follows. Plasma membrane progesterone (P4) receptor coupled to G proteins. Seems to act through a G(i) mediated pathway. May be involved in oocyte maturation. Also binds dehydroepiandrosterone (DHEA), pregnanolone, pregnenolone and allopregnanolone. The chain is Membrane progestin receptor beta from Mus musculus (Mouse).